The primary structure comprises 288 residues: 4-diphosphocytidyl-2-C-methyl-D-erythritol kinase (288 aa).

K8 is an active-site residue. 92 to 102 (PVAAGMAGGST) contacts ATP. The active site involves D134.

The protein belongs to the GHMP kinase family. IspE subfamily.

It carries out the reaction 4-CDP-2-C-methyl-D-erythritol + ATP = 4-CDP-2-C-methyl-D-erythritol 2-phosphate + ADP + H(+). Its pathway is isoprenoid biosynthesis; isopentenyl diphosphate biosynthesis via DXP pathway; isopentenyl diphosphate from 1-deoxy-D-xylulose 5-phosphate: step 3/6. Its function is as follows. Catalyzes the phosphorylation of the position 2 hydroxy group of 4-diphosphocytidyl-2C-methyl-D-erythritol. This is 4-diphosphocytidyl-2-C-methyl-D-erythritol kinase from Clostridium perfringens (strain 13 / Type A).